A 230-amino-acid polypeptide reads, in one-letter code: NEDD8-conjugating enzyme Ubc12 (230 aa).

Residues 1 to 87 (MFRLKELQKK…AELRAQKDID (87 aa)) form a disordered region. The span at 10–20 (KQQQQQQQQQQ) shows a compositional bias: low complexity. Residues 26 to 36 (TNGTDAVTTEP) show a composition bias toward polar residues. Residues 37-57 (TDVKRQNSNDLKEIRKQKSKD) are compositionally biased toward basic and acidic residues. Residues 61 to 70 (SLKTKQSSES) show a composition bias toward polar residues. One can recognise a UBC core domain in the interval 77-221 (PAELRAQKDI…VRQSLRGGYI (145 aa)). Cysteine 159 (glycyl thioester intermediate) is an active-site residue.

This sequence belongs to the ubiquitin-conjugating enzyme family. UBC12 subfamily.

The enzyme catalyses [E1 NEDD8-activating enzyme]-S-[NEDD8 protein]-yl-L-cysteine + [E2 NEDD8-conjugating enzyme]-L-cysteine = [E1 NEDD8-activating enzyme]-L-cysteine + [E2 NEDD8-conjugating enzyme]-S-[NEDD8-protein]-yl-L-cysteine.. The protein operates within protein modification; protein neddylation. Functionally, accepts the ubiquitin-like protein nedd8 from the uba3-nae1 E1 complex and catalyzes its covalent attachment to other proteins. The chain is NEDD8-conjugating enzyme Ubc12 (ube2m) from Dictyostelium discoideum (Social amoeba).